The sequence spans 216 residues: Peptide methionine sulfoxide reductase MsrA (216 aa).

Cys54 is an active-site residue.

The protein belongs to the MsrA Met sulfoxide reductase family.

The catalysed reaction is L-methionyl-[protein] + [thioredoxin]-disulfide + H2O = L-methionyl-(S)-S-oxide-[protein] + [thioredoxin]-dithiol. It carries out the reaction [thioredoxin]-disulfide + L-methionine + H2O = L-methionine (S)-S-oxide + [thioredoxin]-dithiol. In terms of biological role, has an important function as a repair enzyme for proteins that have been inactivated by oxidation. Catalyzes the reversible oxidation-reduction of methionine sulfoxide in proteins to methionine. The chain is Peptide methionine sulfoxide reductase MsrA from Xanthomonas campestris pv. campestris (strain 8004).